A 539-amino-acid chain; its full sequence is O-phosphoserine--tRNA(Cys) ligase (539 aa).

Substrate-binding positions include 188–190 (HMT), 233–235 (SAS), 275–276 (YY), and asparagine 327.

It belongs to the class-II aminoacyl-tRNA synthetase family. O-phosphoseryl-tRNA(Cys) synthetase subfamily. As to quaternary structure, homotetramer. Interacts with SepCysS.

It catalyses the reaction tRNA(Cys) + O-phospho-L-serine + ATP = O-phospho-L-seryl-tRNA(Cys) + AMP + diphosphate. Its function is as follows. Catalyzes the attachment of O-phosphoserine (Sep) to tRNA(Cys). The protein is O-phosphoserine--tRNA(Cys) ligase of Methanosarcina barkeri (strain Fusaro / DSM 804).